The primary structure comprises 174 residues: Methylated-DNA--protein-cysteine methyltransferase (174 aa).

Catalysis depends on Cys-141, which acts as the Nucleophile; methyl group acceptor.

It belongs to the MGMT family.

It is found in the cytoplasm. The catalysed reaction is a 6-O-methyl-2'-deoxyguanosine in DNA + L-cysteinyl-[protein] = S-methyl-L-cysteinyl-[protein] + a 2'-deoxyguanosine in DNA. It catalyses the reaction a 4-O-methyl-thymidine in DNA + L-cysteinyl-[protein] = a thymidine in DNA + S-methyl-L-cysteinyl-[protein]. Its function is as follows. Involved in the cellular defense against the biological effects of O6-methylguanine (O6-MeG) and O4-methylthymine (O4-MeT) in DNA. Repairs the methylated nucleobase in DNA by stoichiometrically transferring the methyl group to a cysteine residue in the enzyme. This is a suicide reaction: the enzyme is irreversibly inactivated. This is Methylated-DNA--protein-cysteine methyltransferase from Thermococcus gammatolerans (strain DSM 15229 / JCM 11827 / EJ3).